We begin with the raw amino-acid sequence, 199 residues long: MMSKLICVARIGAAHGVRGEVRLWTFTEDPLAVLHYGPLTTKDGSRSFEVTKAREAKDHLVASFKGITDRNAAERLNGVELYVPRDRLPETDDDEYYHADLIGLAAETTAGAPLGRVLAIHNFGAGDIIEIAPPSGSTLMLPFTNAVVPTVDLAGGRVIIELPDEIDGEDRASADESASAEDDAAAPNSARHPRESGDP.

The region spanning 93–169 (DDEYYHADLI…IELPDEIDGE (77 aa)) is the PRC barrel domain. Residues 164–199 (DEIDGEDRASADESASAEDDAAAPNSARHPRESGDP) are disordered.

This sequence belongs to the RimM family. As to quaternary structure, binds ribosomal protein uS19.

The protein localises to the cytoplasm. Functionally, an accessory protein needed during the final step in the assembly of 30S ribosomal subunit, possibly for assembly of the head region. Essential for efficient processing of 16S rRNA. May be needed both before and after RbfA during the maturation of 16S rRNA. It has affinity for free ribosomal 30S subunits but not for 70S ribosomes. The polypeptide is Ribosome maturation factor RimM (Bradyrhizobium sp. (strain ORS 278)).